A 628-amino-acid chain; its full sequence is Otolith matrix protein OMM-64 (628 aa).

Residues 1-20 form the signal peptide; the sequence is MLSRLLIVPLIFALAGLAIS. A disordered region spans residues 43 to 628; sequence KGDKDGGGLT…AAATALAAQS (586 aa). Positions 78-93 are enriched in low complexity; the sequence is DSSPDTTDTPDASSSD. Positions 182–214 are enriched in polar residues; sequence TESPGSDSAESPGSDSAESPGSDSTESPGSDST. 3 stretches are compositionally biased toward basic and acidic residues: residues 246-266, 276-285, and 311-343; these read ETDK…ATDK, ELDGKAHAED, and RPEK…RDSA. An N-linked (GlcNAc...) asparagine glycan is attached at Asn318. Acidic residues-rich tracts occupy residues 449-462, 477-489, 514-536, 544-556, and 565-578; these read DSQE…EAEP, EPQE…DTDD, DKED…MDKD, DSVD…DAEP, and DEID…PDSE. The span at 613 to 628 shows a compositional bias: low complexity; the sequence is ASQAADAAATALAAQS.

Specifically expressed in otolith matrix-producing cells.

Its subcellular location is the secreted. The protein localises to the extracellular space. It localises to the extracellular matrix. Calcium-binding component of otoliths, a calcium carbonate structure of the inner ear involved in hearing and balance sensing. Binds calcium. In Oncorhynchus mykiss (Rainbow trout), this protein is Otolith matrix protein OMM-64.